Here is an 874-residue protein sequence, read N- to C-terminus: MKSAEIREAFLRFFEEKGHTRVASSSLIPANDPTLLFTNAGMNQFKDCFLGLEKRAYTRATTSQKCVRAGGKHNDLENVGYTARHHTFFEMLGNFSFGDYFKRDAIHYAWEFLTSDKWLKLPKEKLWVTVYATDDEAYDIWTKEVGVPAERMVRIGDNKGAPYASDNFWAMGDTGPCGPCTEIFFDHGEHIWGGPPGSPEEDGDRYIEIWNNVFMQFNRTADGVLHPLPAPSVDTGMGLERISAVLQHVNSNYEIDLFQSLLNAAADAIGCANEGQASLKVVADHIRSCGFLIADGVTPSNEGRGYVLRRIIRRACRHGNKLGAKGSFFHRIVAALVAEMGDAFPELKQQQAHIERVLKNEEEQFAKTLEQGLKILEQDLAGLAGSVIPGEVVFKLYDTYGFPVDLTGDIARERNLTLDEEGFEREMQAQRERARSASAFGMDYNSLVKVEGETRFIGYQGTSGSGKVLALFKQGMLVDSLSAGEEGVVVLDQTPFYAESGGQIGDCGYLEAQGLRFDVRDTSKAGGAFLHHGIVDSGTLTTGAQVEATVDASVRQATALNHSATHLLHAALREILGEHVSQKGSLVDSQRLRFDFSHFEAIKPEQLRALEDRVNAEIRRNSAVEIEETDIDTAKAKGAMALFGEKYGDTVRVLTMGGGFSVELCGGTHVNRTGDIGLFKITSEGGVAAGVRRIEAVTGAPALAYLNDAEEQLKQAASLVKGSRENLLDKLGGLLERNRQLEKELEQLKAKAASAAGNDLAASAVEVNGIRVLAARQDGLDGKALLALVDQLKNKLGSAVILLGGVQDDKVVLVAGVTQDLTSRLKAGDLMRQAAAAVGGKGGGRPDMAQGGGTDAAKLDEALALALPFAQQAL.

Zn(2+) contacts are provided by H562, H566, C665, and H669.

It belongs to the class-II aminoacyl-tRNA synthetase family. Requires Zn(2+) as cofactor.

The protein localises to the cytoplasm. The catalysed reaction is tRNA(Ala) + L-alanine + ATP = L-alanyl-tRNA(Ala) + AMP + diphosphate. In terms of biological role, catalyzes the attachment of alanine to tRNA(Ala) in a two-step reaction: alanine is first activated by ATP to form Ala-AMP and then transferred to the acceptor end of tRNA(Ala). Also edits incorrectly charged Ser-tRNA(Ala) and Gly-tRNA(Ala) via its editing domain. The protein is Alanine--tRNA ligase of Stutzerimonas stutzeri (strain A1501) (Pseudomonas stutzeri).